The chain runs to 372 residues: Anhydro-N-acetylmuramic acid kinase (372 aa).

An ATP-binding site is contributed by 21–28 (GTSMDGVD).

It belongs to the anhydro-N-acetylmuramic acid kinase family.

The enzyme catalyses 1,6-anhydro-N-acetyl-beta-muramate + ATP + H2O = N-acetyl-D-muramate 6-phosphate + ADP + H(+). It participates in amino-sugar metabolism; 1,6-anhydro-N-acetylmuramate degradation. The protein operates within cell wall biogenesis; peptidoglycan recycling. Functionally, catalyzes the specific phosphorylation of 1,6-anhydro-N-acetylmuramic acid (anhMurNAc) with the simultaneous cleavage of the 1,6-anhydro ring, generating MurNAc-6-P. Is required for the utilization of anhMurNAc either imported from the medium or derived from its own cell wall murein, and thus plays a role in cell wall recycling. The polypeptide is Anhydro-N-acetylmuramic acid kinase (Bordetella avium (strain 197N)).